We begin with the raw amino-acid sequence, 501 residues long: Monocarboxylate transporter 1 (501 aa).

The Cytoplasmic portion of the chain corresponds to 1–22 (MPPAVGGPVGYTPPDGGWGWAV). The helical transmembrane segment at 23-44 (VIGAFISIGFSYAFPKSITVFF) threads the bilayer. Lys38 contributes to the (S)-lactate binding site. Topologically, residues 45-55 (KEIEGIFNATT) are extracellular. Residues 56–80 (SEVSWISSIMLAVMYGGGPISSVLV) form a helical membrane-spanning segment. Residues 81–84 (NKYG) lie on the Cytoplasmic side of the membrane. A helical transmembrane segment spans residues 85-105 (SRPVMIVGGILSGSGLIAASF). Residues 106 to 109 (CNTV) are Extracellular-facing. The chain crosses the membrane as a helical span at residues 110–132 (QELYFSVGVIGGLGLAFNLNPAL). Residues 133-146 (TMIGKYFYKRRPLA) are Cytoplasmic-facing. The helical transmembrane segment at 147 to 169 (NGLAMAGSPVFLSTLAPLNQAFF) threads the bilayer. The Extracellular portion of the chain corresponds to 170–174 (MIYGW). Residues 175–194 (RGSFLILGGLLLNCCVAGAL) traverse the membrane as a helical segment. Topologically, residues 195–261 (MRPIGPKPTT…FLDLSLFKHR (67 aa)) are cytoplasmic. Residues 201 to 236 (KPTTAEKEKSKGSLQEAGKYETKKGASDANTDLIGG) form a disordered region. Phosphoserine is present on residues Ser210, Ser213, and Ser227. The residue at position 231 (Thr231) is a Phosphothreonine. A helical membrane pass occupies residues 262 to 288 (GFLLYLSGNVLMFFGLFTPLVFLSNYG). Over 289 to 295 (KSKHYSS) the chain is Extracellular. A helical transmembrane segment spans residues 296 to 317 (EKAAFLLSILAFVDMVARPSMG). Residue Asp309 coordinates H(+). Arg313 serves as a coordination point for (S)-lactate. Over 318-328 (LVANTKWVRPR) the chain is Cytoplasmic. The helical transmembrane segment at 329-349 (VQYFFAASIIANGLCHLAAPL) threads the bilayer. Residues 350–353 (SSTY) are Extracellular-facing. A helical membrane pass occupies residues 354-375 (IELCIYAGFFGFAFGWLSSVLF). Topologically, residues 376 to 389 (ETLMDLVGPQRFSS) are cytoplasmic. The chain crosses the membrane as a helical span at residues 390 to 410 (AVGLVTIVECCPVLLGPPVLG). Residues 411 to 421 (RLNDIYGDYKY) lie on the Extracellular side of the membrane. Residues 422–443 (TYWACGIILIVAGIYLFIGMGI) traverse the membrane as a helical segment. Residues 444 to 501 (NYRLLEKEQKAEKQQKKESKDEETNVDVAEKPKEVIDAAESPEHKATEEDPKEAESPV) lie on the Cytoplasmic side of the membrane. The tract at residues 454 to 501 (AEKQQKKESKDEETNVDVAEKPKEVIDAAESPEHKATEEDPKEAESPV) is disordered. Ser462 carries the post-translational modification Phosphoserine. Thr467 bears the Phosphothreonine mark. Ser484 and Ser499 each carry phosphoserine.

The protein belongs to the major facilitator superfamily. Monocarboxylate porter (TC 2.A.1.13) family. In terms of assembly, interacts with BSG; interaction mediates SLC16A1 targeting to the plasma membrane. Interacts with EMB; interaction mediates SLC16A1 targeting to the plasma membrane.

Its subcellular location is the cell membrane. The protein resides in the basolateral cell membrane. The protein localises to the apical cell membrane. The catalysed reaction is (S)-lactate(in) + H(+)(in) = (S)-lactate(out) + H(+)(out). It carries out the reaction acetate(out) + H(+)(out) = acetate(in) + H(+)(in). The enzyme catalyses acetoacetate(out) + H(+)(out) = acetoacetate(in) + H(+)(in). It catalyses the reaction pyruvate(out) + H(+)(out) = pyruvate(in) + H(+)(in). The catalysed reaction is (R)-3-hydroxybutanoate(out) + H(+)(out) = (R)-3-hydroxybutanoate(in) + H(+)(in). It carries out the reaction 3-methyl-2-oxobutanoate(out) + H(+)(out) = 3-methyl-2-oxobutanoate(in) + H(+)(in). The enzyme catalyses 4-methyl-2-oxopentanoate(out) + H(+)(out) = 4-methyl-2-oxopentanoate(in) + H(+)(in). It catalyses the reaction succinate(in) + 2 H(+)(in) = succinate(out) + 2 H(+)(out). Functionally, bidirectional proton-coupled monocarboxylate transporter. Catalyzes the rapid transport across the plasma membrane of many monocarboxylates such as lactate, pyruvate, acetate and the ketone bodies acetoacetate and beta-hydroxybutyrate, and thus contributes to the maintenance of intracellular pH. The transport direction is determined by the proton motive force and the concentration gradient of the substrate monocarboxylate. MCT1 is a major lactate exporter. Plays a role in cellular responses to a high-fat diet by modulating the cellular levels of lactate and pyruvate that contribute to the regulation of central metabolic pathways and insulin secretion, with concomitant effects on plasma insulin levels and blood glucose homeostasis. Facilitates the protonated monocarboxylate form of succinate export, that its transient protonation upon muscle cell acidification in exercising muscle and ischemic heart. Functions via alternate outward- and inward-open conformation states. Protonation and deprotonation of 309-Asp is essential for the conformational transition. The sequence is that of Monocarboxylate transporter 1 (SLC16A1) from Bos taurus (Bovine).